A 172-amino-acid polypeptide reads, in one-letter code: MNSDFICLGIITSPHGIKGHVKIKTFTENPQNFTSYGKLTDGITTYEINIIQVVSKNTIIAKINNITSRTNAELLRNKKLFIEKTKLPNLIENEFYHSDLVGLQVILEDNNIFGTIKKIYNFGSCDIIEILLYNSKKSTMLPFSKDIFTHINTKERYVILKLPEIIGSNSGI.

One can recognise a PRC barrel domain in the interval 92-167 (ENEFYHSDLV…VILKLPEIIG (76 aa)).

The protein belongs to the RimM family. In terms of assembly, binds ribosomal protein uS19.

It localises to the cytoplasm. Functionally, an accessory protein needed during the final step in the assembly of 30S ribosomal subunit, possibly for assembly of the head region. Essential for efficient processing of 16S rRNA. May be needed both before and after RbfA during the maturation of 16S rRNA. It has affinity for free ribosomal 30S subunits but not for 70S ribosomes. This chain is Ribosome maturation factor RimM, found in Ehrlichia ruminantium (strain Gardel).